A 396-amino-acid chain; its full sequence is S-adenosylmethionine synthase (396 aa).

Residue histidine 15 coordinates ATP. Residue aspartate 17 participates in Mg(2+) binding. K(+) is bound at residue glutamate 43. Residues glutamate 56 and glutamine 99 each contribute to the L-methionine site. The interval 99–109 (QSGDIAQGVDT) is flexible loop. Residues 173 to 175 (DGK), 241 to 242 (RF), aspartate 250, 256 to 257 (RK), alanine 273, and lysine 277 each bind ATP. Aspartate 250 is an L-methionine binding site. Position 281 (lysine 281) interacts with L-methionine.

Belongs to the AdoMet synthase family. As to quaternary structure, homotetramer; dimer of dimers. Mg(2+) is required as a cofactor. The cofactor is K(+).

The protein localises to the cytoplasm. The enzyme catalyses L-methionine + ATP + H2O = S-adenosyl-L-methionine + phosphate + diphosphate. It participates in amino-acid biosynthesis; S-adenosyl-L-methionine biosynthesis; S-adenosyl-L-methionine from L-methionine: step 1/1. Catalyzes the formation of S-adenosylmethionine (AdoMet) from methionine and ATP. The overall synthetic reaction is composed of two sequential steps, AdoMet formation and the subsequent tripolyphosphate hydrolysis which occurs prior to release of AdoMet from the enzyme. This is S-adenosylmethionine synthase from Nocardioides sp. (strain ATCC BAA-499 / JS614).